The chain runs to 728 residues: Tripartite terminase subunit 1 (728 aa).

The segment at 186-214 (CASCFAEAAMLPNQGESVLSMLAAVNCNH) adopts a C3H1-type zinc-finger fold. The interval 239-278 (ARAAGRAGGGRESERRGREDADDEEDDEEEPRDGQGDAGD) is disordered. The segment covering 247–257 (GGRESERRGRE) has biased composition (basic and acidic residues). The span at 258 to 269 (DADDEEDDEEEP) shows a compositional bias: acidic residues. 653–660 (YNRVWEKS) provides a ligand contact to ATP.

The protein belongs to the herpesviridae TRM1 protein family. In terms of assembly, associates with TRM2 and TRM3 to form the tripartite terminase complex. Interacts with portal protein.

It localises to the host nucleus. Its function is as follows. Component of the molecular motor that translocates viral genomic DNA in empty capsid during DNA packaging. Forms a tripartite terminase complex together with TRM2 and TRM3 in the host cytoplasm. Once the complex reaches the host nucleus, it interacts with the capsid portal vertex. This portal forms a ring in which genomic DNA is translocated into the capsid. TRM1 carries an endonuclease activity that plays an important role for the cleavage of concatemeric viral DNA into unit length genomes. The protein is Tripartite terminase subunit 1 of Equine herpesvirus 2 (strain 86/87) (EHV-2).